The sequence spans 888 residues: E3 ubiquitin-protein ligase SH3RF1 (888 aa).

An RING-type zinc finger spans residues 12-53; the sequence is CPVCLERLDASAKVLPCQHTFCKRCLLGIVGSRNELRCPECR. Positions 108–127 are enriched in polar residues; sequence SSKDLQSSQGGQQPRVQSWS. Positions 108–128 are disordered; sequence SSKDLQSSQGGQQPRVQSWSP. 2 consecutive SH3 domains span residues 134-193 and 196-259; these read PQLP…IIKP and QPPP…FNSA. Residues 275–321 are disordered; that stretch reads DAGECSSAAAQSSTAPKHSDTKKNTKKRHSFTSLTMANKSSQASQNR. The segment at 292 to 362 is interaction with RAC1; it reads HSDTKKNTKK…APSQVHISTT (71 aa). Phosphoserine is present on serine 304. Over residues 305-321 the composition is skewed to polar residues; that stretch reads FTSLTMANKSSQASQNR. Residues 440–543 form an interaction with AKT2 region; it reads HLRPQTRPSV…STAGGPAQKL (104 aa). The SH3 3 domain occupies 445 to 506; the sequence is TRPSVYVAIY…PGNYVAPVTR (62 aa). Disordered regions lie at residues 516–548, 620–639, and 684–741; these read VPMS…GNGV, SVGL…LMPG, and TVLP…ASPT. Polar residues predominate over residues 520-535; that stretch reads TAGQTSRGVTMVSPST. At serine 532 the chain carries Phosphoserine. Positions 692–704 are enriched in polar residues; sequence SPDSASSACGNSS. Positions 707 to 718 are enriched in basic and acidic residues; sequence KPDKDSKKEKKG. A Phosphoserine modification is found at serine 735. Residues 829 to 888 form the SH3 4 domain; that stretch reads VVCERHRVVVSYPPQSEAELELKEGDIVFVHKKREDGWFKGTLQRNGKTGLFPGSFVENI.

It belongs to the SH3RF family. In terms of assembly, interacts with RAC1; in a GTP-dependent manner. Interacts with MAP3K10/MLK2 and MAP3K11/MLK3. Interacts with MAPK8IP; this interaction leads to the PJAC complex (POSH-JIP or SH3RF1/MAPK8IP apoptotic complex) with a 1:1 ratio. Interacts with SIAH1. Interacts with HERP1. Probably part of a signaling complex that may contain SH3RF1, MAPK8IP, DLK1, MAP2K4/MKK4, MAP2K7/MKK7, MAPK8/JNK1, MAPK9/JNK2, AKT1 and AKT2. Found in a complex with RAC2, MAP3K7/TAK1, MAP2K7/MKK7, MAPK8IP1/JIP1, MAPK8/JNK1 and MAPK9/JNK2. Found in a complex with RAC1, MAP3K11/MLK3, MAP2K7/MKK7, MAPK8IP1/JIP1 and MAPK8/JNK1. Interacts with SH3RF2. Phosphorylated at Ser-304 by AKT1 and AKT2. When phosphorylated, it has reduced ability to bind Rac. In terms of processing, autoubiquitinated. Ubiquitinated by SH3RF2, leading to proteasome-mediated degradation.

Its subcellular location is the cytoplasm. It localises to the perinuclear region. It is found in the cell projection. The protein localises to the lamellipodium. The protein resides in the golgi apparatus. Its subcellular location is the trans-Golgi network. The catalysed reaction is S-ubiquitinyl-[E2 ubiquitin-conjugating enzyme]-L-cysteine + [acceptor protein]-L-lysine = [E2 ubiquitin-conjugating enzyme]-L-cysteine + N(6)-ubiquitinyl-[acceptor protein]-L-lysine.. It functions in the pathway protein modification; protein ubiquitination. Has E3 ubiquitin-protein ligase activity. In the absence of an external substrate, it can catalyze self-ubiquitination. Stimulates ubiquitination of potassium channel KCNJ1, enhancing it's dynamin-dependent and clathrin-independent endocytosis. Acts as a scaffold protein that coordinates with MAPK8IP1/JIP1 in organizing different components of the JNK pathway, including RAC1 or RAC2, MAP3K11/MLK3 or MAP3K7/TAK1, MAP2K7/MKK7, MAPK8/JNK1 and/or MAPK9/JNK2 into a functional multiprotein complex to ensure the effective activation of the JNK signaling pathway. Regulates the differentiation of CD4(+) and CD8(+) T-cells and promotes T-helper 1 (Th1) cell differentiation. Regulates the activation of MAPK8/JNK1 and MAPK9/JNK2 in CD4(+) T-cells and the activation of MAPK8/JNK1 in CD8(+) T-cells. Plays a crucial role in the migration of neocortical neurons in the developing brain. Controls proper cortical neuronal migration and the formation of proximal cytoplasmic dilation in the leading process (PCDLP) in migratory neocortical neurons by regulating the proper localization of activated RAC1 and F-actin assembly. Its function is as follows. (Microbial infection) Plays an essential role in the targeting of HIV-1 Gag to the plasma membrane, this function is dependent on it's RING domain, and hence it's E3 ligase activity. The chain is E3 ubiquitin-protein ligase SH3RF1 (SH3RF1) from Homo sapiens (Human).